Consider the following 498-residue polypeptide: ATP synthase subunit beta, chloroplastic (498 aa).

172-179 (GGAGVGKT) is an ATP binding site.

The protein belongs to the ATPase alpha/beta chains family. F-type ATPases have 2 components, CF(1) - the catalytic core - and CF(0) - the membrane proton channel. CF(1) has five subunits: alpha(3), beta(3), gamma(1), delta(1), epsilon(1). CF(0) has four main subunits: a(1), b(1), b'(1) and c(9-12).

The protein localises to the plastid. Its subcellular location is the chloroplast thylakoid membrane. It carries out the reaction ATP + H2O + 4 H(+)(in) = ADP + phosphate + 5 H(+)(out). Produces ATP from ADP in the presence of a proton gradient across the membrane. The catalytic sites are hosted primarily by the beta subunits. The sequence is that of ATP synthase subunit beta, chloroplastic from Castanea sativa (Sweet chestnut).